We begin with the raw amino-acid sequence, 100 residues long: MHLSPQEKDKLLVVTAALLAERRLQRGLKLNHPEAVAFLSLQILEGARDGTTVAELMQVGSTWLSRHQVMDGVAELVSEVQMEATFPDGTKLVTLHQPIR.

It belongs to the urease gamma subunit family. Heterotrimer of UreA (gamma), UreB (beta) and UreC (alpha) subunits. Three heterotrimers associate to form the active enzyme.

It localises to the cytoplasm. It carries out the reaction urea + 2 H2O + H(+) = hydrogencarbonate + 2 NH4(+). It functions in the pathway nitrogen metabolism; urea degradation; CO(2) and NH(3) from urea (urease route): step 1/1. The sequence is that of Urease subunit gamma from Synechococcus sp. (strain RCC307).